The following is a 390-amino-acid chain: S-adenosylmethionine synthase 3 (390 aa).

Glu9 contributes to the Mg(2+) binding site. His15 is an ATP binding site. Glu43 contributes to the K(+) binding site. Residues Glu56 and Gln99 each coordinate L-methionine. Residues 167–169, 235–238, Asp246, 252–253, Ala269, Lys273, and Lys277 each bind ATP; these read DGK, SGRF, and RK. Asp246 provides a ligand contact to L-methionine. Lys277 lines the L-methionine pocket.

This sequence belongs to the AdoMet synthase family. Homotetramer. Interacts with GRF3. Requires Mn(2+) as cofactor. Mg(2+) is required as a cofactor. Co(2+) serves as cofactor. The cofactor is K(+).

The protein resides in the cytoplasm. It carries out the reaction L-methionine + ATP + H2O = S-adenosyl-L-methionine + phosphate + diphosphate. It functions in the pathway amino-acid biosynthesis; S-adenosyl-L-methionine biosynthesis; S-adenosyl-L-methionine from L-methionine: step 1/1. Its activity is regulated as follows. Inhibited by 5,5'-dithiobis-2-nitrobenzoic acid (DTNB) and N-ethylmaleimide (NEM) (in vitro). Its function is as follows. Catalyzes the formation of S-adenosylmethionine from methionine and ATP. The reaction comprises two steps that are both catalyzed by the same enzyme: formation of S-adenosylmethionine (AdoMet) and triphosphate, and subsequent hydrolysis of the triphosphate. Involved in the biosynthesis of lignin. The chain is S-adenosylmethionine synthase 3 (METK3) from Arabidopsis thaliana (Mouse-ear cress).